A 182-amino-acid polypeptide reads, in one-letter code: uncharacterized protein (182 aa).

Its subcellular location is the mitochondrion. This is an uncharacterized protein from Schizosaccharomyces pombe (strain 972 / ATCC 24843) (Fission yeast).